Consider the following 95-residue polypeptide: Blastocyst protein 4 (95 aa).

Residues 1–20 (MGAVFAIIGGFALDSPILRL) form the signal peptide.

In Oryctolagus cuniculus (Rabbit), this protein is Blastocyst protein 4.